A 646-amino-acid polypeptide reads, in one-letter code: A-kinase anchor protein 8-like (646 aa).

The segment at 1-268 (MSYTGFVQGS…MRRTWKTWTT (268 aa)) is sufficient for activation of CTE-mediated expression. Position 208 is an asymmetric dimethylarginine; alternate (Arg208). The residue at position 208 (Arg208) is an Omega-N-methylarginine; alternate. Residues Arg217, Arg237, and Arg247 each carry the omega-N-methylarginine modification. Lys257 carries the N6-acetyllysine modification. The disordered stretch occupies residues 264–381 (KTWTTADFRT…QDKQKKRQRD (118 aa)). The residue at position 267 (Thr267) is a Phosphothreonine. Residues 274–279 (KKKKRK) carry the Nuclear localization signal motif. The Nuclear export signal (NES) signature appears at 280–296 (QGGSPDEPDSKATRTDC). Ser283 carries the post-translational modification Phosphoserine. Positions 287–296 (PDSKATRTDC) are enriched in basic and acidic residues. A Phosphothreonine modification is found at Thr292. Ser297 is modified (phosphoserine). The segment covering 298 to 314 (DNSDSDNDEGTEGEATE) has biased composition (acidic residues). The span at 337–349 (EDGREEGKEDPEK) shows a compositional bias: basic and acidic residues. A Nuclear localization signal motif is present at residues 362 to 364 (KRK). 2 C2H2 AKAP95-type zinc fingers span residues 391–413 (CSLC…SKFH) and 484–507 (CAAC…TMDH). The interval 545-646 (GENPFTDSPE…DDEEGGGGAP (102 aa)) is disordered. Ser552 carries the post-translational modification Phosphoserine. The segment covering 552–563 (SPEEEKEQEEAE) has biased composition (acidic residues). Low complexity predominate over residues 564–586 (GGALDEGAQGEAAGISEGAEGVP). Residues 587–607 (AQPPVPPEPAPGAVSPPPPPP) show a composition bias toward pro residues. The span at 634–646 (DVEDDEEGGGGAP) shows a compositional bias: acidic residues.

Belongs to the AKAP95 family. As to quaternary structure, interacts (via N-terminus) with DHX9 (via RGG region). Interacts with TMPO isoform Beta, PRPF40A, RNF43, lamin-B. Interacts with HDAC3; increased during mitosis. Interacts with EBV EBNA-LP. Interacts with HIV-1 reverse transcriptase/ribonuclease H. Post-translationally, phosphorylated on serine or threonine residues possibly by PKA; probably modulating the interaction with TMPO isoform Beta. In terms of tissue distribution, ubiquitously expressed. Expressed in the brain cortex (at protein level).

The protein localises to the nucleus. Its subcellular location is the nucleus matrix. The protein resides in the nucleus speckle. It localises to the PML body. It is found in the cytoplasm. Could play a role in constitutive transport element (CTE)-mediated gene expression by association with DHX9. Increases CTE-dependent nuclear unspliced mRNA export. Proposed to target PRKACA to the nucleus but does not seem to be implicated in the binding of regulatory subunit II of PKA. May be involved in nuclear envelope breakdown and chromatin condensation. May be involved in anchoring nuclear membranes to chromatin in interphase and in releasing membranes from chromating at mitosis. May regulate the initiation phase of DNA replication when associated with TMPO isoform Beta. Required for cell cycle G2/M transition and histone deacetylation during mitosis. In mitotic cells recruits HDAC3 to the vicinity of chromatin leading to deacetylation and subsequent phosphorylation at 'Ser-10' of histone H3; in this function seems to act redundantly with AKAP8. May be involved in regulation of pre-mRNA splicing. Its function is as follows. (Microbial infection) In case of EBV infection, may target PRKACA to EBNA-LP-containing nuclear sites to modulate transcription from specific promoters. Functionally, (Microbial infection) Can synergize with DHX9 to activate the CTE-mediated gene expression of type D retroviruses. In terms of biological role, (Microbial infection) In case of HIV-1 infection, involved in the DHX9-promoted annealing of host tRNA(Lys3) to viral genomic RNA as a primer in reverse transcription; in vitro negatively regulates DHX9 annealing activity. This is A-kinase anchor protein 8-like (AKAP8L) from Homo sapiens (Human).